The chain runs to 220 residues: Ribosomal RNA small subunit methyltransferase J (220 aa).

Residues 55–56 (RD), 71–72 (ER), and Asp123 contribute to the S-adenosyl-L-methionine site.

This sequence belongs to the methyltransferase superfamily. RsmJ family.

The protein localises to the cytoplasm. It catalyses the reaction guanosine(1516) in 16S rRNA + S-adenosyl-L-methionine = N(2)-methylguanosine(1516) in 16S rRNA + S-adenosyl-L-homocysteine + H(+). Its function is as follows. Specifically methylates the guanosine in position 1516 of 16S rRNA. This chain is Ribosomal RNA small subunit methyltransferase J, found in Rhodopseudomonas palustris (strain BisB5).